We begin with the raw amino-acid sequence, 86 residues long: Serine protease inhibitor Kazal-type 2 (86 aa).

The signal sequence occupies residues 1-16; it reads MLRLVLLLLATDFAAS. Residues 32–86 form the Kazal-like domain; that stretch reads QFRTPDCHRFDYPVCSKHLSPVCGTDMNTYGNECTLCMKIREDGSHINIIKDEPC. 3 disulfide bridges follow: C38-C68, C46-C65, and C54-C86.

It is found in the secreted. The protein resides in the cytoplasmic vesicle. The protein localises to the secretory vesicle. It localises to the acrosome. As a strong inhibitor of acrosin, it is required for normal spermiogenesis. It probably hinders premature activation of proacrosin and other proteases, thus preventing the cascade of events leading to spermiogenesis defects. May be involved in the regulation of serine protease-dependent germ cell apoptosis. It also inhibits trypsin. The sequence is that of Serine protease inhibitor Kazal-type 2 (Spink2) from Rattus norvegicus (Rat).